Reading from the N-terminus, the 271-residue chain is Putative pirin-like protein At3g59260 (271 aa).

It belongs to the pirin family.

It localises to the nucleus. The protein is Putative pirin-like protein At3g59260 of Arabidopsis thaliana (Mouse-ear cress).